A 950-amino-acid polypeptide reads, in one-letter code: A disintegrin and metalloproteinase with thrombospondin motifs 15 (950 aa).

A signal peptide spans M1–G17. Residues G18–R212 constitute a propeptide that is removed on maturation. A glycan (N-linked (GlcNAc...) asparagine) is linked at N141. The disordered stretch occupies residues S151–S172. A Cysteine switch motif is present at residues S172–G179. C174 is a Zn(2+) binding site. In terms of domain architecture, Peptidase M12B spans R218 to P427. 11 disulfides stabilise this stretch: C293/C345, C322/C327, C339/C422, C377/C406, C448/C470, C459/C480, C465/C499, C493/C504, C528/C565, C532/C570, and C543/C555. Zn(2+) is bound at residue H361. Residue E362 is part of the active site. 2 residues coordinate Zn(2+): H365 and H371. Positions S428–V515 constitute a Disintegrin domain. Residues D516–P571 enclose the TSP type-1 1 domain. N-linked (GlcNAc...) asparagine glycosylation is found at N591, N623, and N679. Residues A701–R838 form a spacer region. The tract at residues F798 to H822 is disordered. Basic and acidic residues predominate over residues K802–R816. TSP type-1 domains are found at residues P839–P895 and T896–P949.

It depends on Zn(2+) as a cofactor. Post-translationally, the precursor is cleaved by a furin endopeptidase. Glycosylated. Can be O-fucosylated by POFUT2 on a serine or a threonine residue found within the consensus sequence C1-X(2)-(S/T)-C2-G of the TSP type-1 repeat domains where C1 and C2 are the first and second cysteine residue of the repeat, respectively. Fucosylated repeats can then be further glycosylated by the addition of a beta-1,3-glucose residue by the glucosyltransferase, B3GALTL. Fucosylation mediates the efficient secretion of ADAMTS family members. Can be C-glycosylated with one or two mannose molecules on tryptophan residues within the consensus sequence W-X-X-W of the TPRs. Also N-glycosylated. These other glycosylations can also facilitate secretion. Expressed in fetal liver and kidney, but not in any of the adult tissues examined.

The protein resides in the secreted. The protein localises to the extracellular space. It localises to the extracellular matrix. Its subcellular location is the cell surface. Metalloprotease which has proteolytic activity against the proteoglycan VCAN, cleaving it at the 'Glu-1428-|-1429-Ala' site. Cleaves VCAN in the pericellular matrix surrounding myoblasts, facilitating myoblast contact and fusion which is required for skeletal muscle development and regeneration. This Homo sapiens (Human) protein is A disintegrin and metalloproteinase with thrombospondin motifs 15 (ADAMTS15).